Here is a 418-residue protein sequence, read N- to C-terminus: Acyltransferase calJ (418 aa).

Ser79 (acyl-ester intermediate) is an active-site residue. Substrate-binding residues include Arg176 and Tyr191.

Belongs to the class-A beta-lactamase family.

It participates in secondary metabolite biosynthesis. In terms of biological role, acyltransferase; part of the gene cluster that mediates the biosynthesis of calbistrin A and related compounds. Calbistrin A is a secondary metabolite with an interesting structure that was recently found to have bioactivity against leukemia cells. It consists of two polyketides linked by an ester bond: a bicyclic decalin containing polyketide and a linear 12 carbon dioic acid structure. The polyketide synthase calA is probably responsible for forming the decalin moiety. Because calA lacks a designated enoylreductase (ER) domain, the required activity is provided by the trans-enoyl reductase calK. Following release from the PKS, calF then probably catalyzes the oxidation and the subsequent Diels Alder cycloisomerization that lead to the formation of the decalin moiety. The decalin polyketide backbone includes two C-methyl groups, at C7 and C11 in backbone, of which the C7 position is probably methylated by the methyltransferase domain of calA. A candidate for adding the methyl group at C11, if not done by CalA, is the cluster methyltransferase calH. Several additional tailoring enzymes within the cluster could be involved in the modification of the decalin polyketide product. Those include the 3 cytochrome P450 monooxygenases CalE, CalG and CalL, of which one might be responsible for the introduction of the extra hydroxyl group attached to the backbone of the decalin moiety, at position C9 in the backbone, that allows for attachment of the linear moiety. One tailoring enzyme activity that is expected to be involved in biosynthesis of calbistrin is an acyltransferase for connecting the two polyketide synthase products, and which could be performed by the cluster acyltransferase calJ. The enzyme responsible for the biosynthesis of the linear moiety, probably a second PKS, has not been identified yet. The polypeptide is Acyltransferase calJ (Penicillium decumbens).